We begin with the raw amino-acid sequence, 69 residues long: Pantinin-1 (69 aa).

The first 23 residues, 1–23, serve as a signal peptide directing secretion; sequence MKTQFVILMITVILMQMLVQTEG. Valine amide is present on Val-37. Positions 41–69 are excised as a propeptide; sequence GLNDRDQLDDLFDSDLSDADIKLLKEMFK.

This sequence belongs to the non-disulfide-bridged peptide (NDBP) superfamily. Short antimicrobial peptide (group 4) family. As to expression, expressed by the venom gland.

The protein localises to the secreted. It is found in the target cell membrane. Its function is as follows. Amphipathic peptide that possesses relatively strong activities against Gram-positive bacteria and a fungus, but has very weak antimicrobial activities against Gram-negative bacteria. Also exhibits very low hemolytic activities against human erythrocytes (64 uM induce 21% of hemolysis). Minimal inhibitory concentration (MIC) are the following: 8 uM against S.aureus, 32 uM against B.magaterium, 32 uM against M.luteus, 28 uM against vancomycin-resistant Enterococci, 14 uM against methicillin-resistant S.aureus, 62 uM against E.coli, &gt;87 uM against P.putida, &gt;87 uM against K.oxytoca, 76 uM against E.cloacae, 72 uM against S.enterica and 16 uM against the fungus C.tropicalis. The chain is Pantinin-1 from Pandinus imperator (Emperor scorpion).